Reading from the N-terminus, the 550-residue chain is CTP synthase (550 aa).

The interval 1–267 (MKTKFIFITG…DQKIAIMLRL (267 aa)) is amidoligase domain. Serine 14 provides a ligand contact to CTP. Residue serine 14 coordinates UTP. Residues 15-20 (SLGKGL) and aspartate 72 contribute to the ATP site. Mg(2+) is bound by residues aspartate 72 and glutamate 141. Residues 148-150 (DIE), 188-193 (KTKPTQ), and lysine 224 contribute to the CTP site. Residues 188–193 (KTKPTQ) and lysine 224 each bind UTP. The region spanning 292-545 (TIGIVGKYVD…IKAAKKEAMG (254 aa)) is the Glutamine amidotransferase type-1 domain. Glycine 354 contacts L-glutamine. Residue cysteine 381 is the Nucleophile; for glutamine hydrolysis of the active site. L-glutamine is bound by residues 382-385 (LGMQ), glutamate 405, and arginine 473. Residues histidine 518 and glutamate 520 contribute to the active site.

It belongs to the CTP synthase family. As to quaternary structure, homotetramer.

The enzyme catalyses UTP + L-glutamine + ATP + H2O = CTP + L-glutamate + ADP + phosphate + 2 H(+). It carries out the reaction L-glutamine + H2O = L-glutamate + NH4(+). The catalysed reaction is UTP + NH4(+) + ATP = CTP + ADP + phosphate + 2 H(+). Its pathway is pyrimidine metabolism; CTP biosynthesis via de novo pathway; CTP from UDP: step 2/2. Its activity is regulated as follows. Allosterically activated by GTP, when glutamine is the substrate; GTP has no effect on the reaction when ammonia is the substrate. The allosteric effector GTP functions by stabilizing the protein conformation that binds the tetrahedral intermediate(s) formed during glutamine hydrolysis. Inhibited by the product CTP, via allosteric rather than competitive inhibition. Catalyzes the ATP-dependent amination of UTP to CTP with either L-glutamine or ammonia as the source of nitrogen. Regulates intracellular CTP levels through interactions with the four ribonucleotide triphosphates. The sequence is that of CTP synthase from Nitratidesulfovibrio vulgaris (strain DSM 19637 / Miyazaki F) (Desulfovibrio vulgaris).